Here is a 269-residue protein sequence, read N- to C-terminus: Cytochrome c oxidase subunit 3 (269 aa).

6 helical membrane-spanning segments follow: residues 46-66 (NSYY…AFWF), 90-110 (GVIL…WAFF), 138-160 (PLLN…HSLI), 167-187 (ALYG…FQGV), 207-227 (FGTG…AVAL), and 247-267 (ILYW…IYYW).

Belongs to the cytochrome c oxidase subunit 3 family. In terms of assembly, component of the cytochrome c oxidase (complex IV, CIV), a multisubunit enzyme composed of a catalytic core of 3 subunits and several supernumerary subunits. The complex exists as a monomer or a dimer and forms supercomplexes (SCs) in the inner mitochondrial membrane with ubiquinol-cytochrome c oxidoreductase (cytochrome b-c1 complex, complex III, CIII).

Its subcellular location is the mitochondrion inner membrane. It carries out the reaction 4 Fe(II)-[cytochrome c] + O2 + 8 H(+)(in) = 4 Fe(III)-[cytochrome c] + 2 H2O + 4 H(+)(out). Component of the cytochrome c oxidase, the last enzyme in the mitochondrial electron transport chain which drives oxidative phosphorylation. The respiratory chain contains 3 multisubunit complexes succinate dehydrogenase (complex II, CII), ubiquinol-cytochrome c oxidoreductase (cytochrome b-c1 complex, complex III, CIII) and cytochrome c oxidase (complex IV, CIV), that cooperate to transfer electrons derived from NADH and succinate to molecular oxygen, creating an electrochemical gradient over the inner membrane that drives transmembrane transport and the ATP synthase. Cytochrome c oxidase is the component of the respiratory chain that catalyzes the reduction of oxygen to water. Electrons originating from reduced cytochrome c in the intermembrane space (IMS) are transferred via the dinuclear copper A center (CU(A)) of subunit 2 and heme A of subunit 1 to the active site in subunit 1, a binuclear center (BNC) formed by heme A3 and copper B (CU(B)). The BNC reduces molecular oxygen to 2 water molecules using 4 electrons from cytochrome c in the IMS and 4 protons from the mitochondrial matrix. The chain is Cytochrome c oxidase subunit 3 (COIII) from Podospora anserina (strain S / ATCC MYA-4624 / DSM 980 / FGSC 10383) (Pleurage anserina).